A 303-amino-acid chain; its full sequence is Sulfate adenylyltransferase subunit 2 (303 aa).

Belongs to the PAPS reductase family. CysD subfamily. Heterodimer composed of CysD, the smaller subunit, and CysN.

It catalyses the reaction sulfate + ATP + H(+) = adenosine 5'-phosphosulfate + diphosphate. Its pathway is sulfur metabolism; hydrogen sulfide biosynthesis; sulfite from sulfate: step 1/3. Functionally, with CysN forms the ATP sulfurylase (ATPS) that catalyzes the adenylation of sulfate producing adenosine 5'-phosphosulfate (APS) and diphosphate, the first enzymatic step in sulfur assimilation pathway. APS synthesis involves the formation of a high-energy phosphoric-sulfuric acid anhydride bond driven by GTP hydrolysis by CysN coupled to ATP hydrolysis by CysD. This chain is Sulfate adenylyltransferase subunit 2, found in Bacteroides fragilis (strain YCH46).